The primary structure comprises 310 residues: HTH-type transcriptional regulator CbbR (310 aa).

The 58-residue stretch at 7-64 (ITLKQLRALVAVAGSASLTGGATRLGLTPPAIHSQIRNLEEAFGVPLLHRPPETGSFT) folds into the HTH lysR-type domain. Positions 24-43 (LTGGATRLGLTPPAIHSQIR) form a DNA-binding region, H-T-H motif.

This sequence belongs to the LysR transcriptional regulatory family.

Functionally, transcriptional activator for the cbb operon for RuBisCO and other Calvin cycle genes. The chain is HTH-type transcriptional regulator CbbR (cbbR) from Cereibacter sphaeroides (Rhodobacter sphaeroides).